The primary structure comprises 430 residues: Probable carboxypeptidase AFLA_037450 (430 aa).

The signal sequence occupies residues 1–16; it reads MKSIYSLVLCTALTAA. An N-linked (GlcNAc...) asparagine glycan is attached at asparagine 84. Aspartate 156 contacts Zn(2+). Residue glutamate 188 is the Proton acceptor of the active site. Position 189 (glutamate 189) interacts with Zn(2+). Residue asparagine 285 is glycosylated (N-linked (GlcNAc...) asparagine).

This sequence belongs to the peptidase M20A family. It depends on Zn(2+) as a cofactor.

It is found in the secreted. This Aspergillus flavus (strain ATCC 200026 / FGSC A1120 / IAM 13836 / NRRL 3357 / JCM 12722 / SRRC 167) protein is Probable carboxypeptidase AFLA_037450.